Here is a 243-residue protein sequence, read N- to C-terminus: UPF0758 protein sll0766 (243 aa).

In terms of domain architecture, MPN spans 113–235 (VVDSPEAAAI…HQSLRQCTDL (123 aa)). Zn(2+) is bound by residues His184, His186, and Asp197. Positions 184 to 197 (HNHPSGGLEPSPED) match the JAMM motif motif.

This sequence belongs to the UPF0758 family.

The polypeptide is UPF0758 protein sll0766 (Synechocystis sp. (strain ATCC 27184 / PCC 6803 / Kazusa)).